A 354-amino-acid polypeptide reads, in one-letter code: Trans-3-hydroxy-L-proline dehydratase (354 aa).

Catalysis depends on C104, which acts as the Proton acceptor. Residues 105–106, D269, and 274–275 each bind substrate; these read GH and GS.

The protein belongs to the proline racemase family. Homodimer. As to expression, ubiquitously expressed.

The catalysed reaction is trans-3-hydroxy-L-proline = 1-pyrroline-2-carboxylate + H2O. In terms of biological role, catalyzes the dehydration of trans-3-hydroxy-L-proline to Delta(1)-pyrroline-2-carboxylate (Pyr2C). May be required to degrade trans-3-hydroxy-L-proline from the diet and originating from the degradation of proteins such as collagen-IV that contain it. In Homo sapiens (Human), this protein is Trans-3-hydroxy-L-proline dehydratase (L3HYPDH).